The primary structure comprises 2280 residues: Metacaspase-3 (2280 aa).

Disordered regions lie at residues 56–83 (ILSK…DRED), 202–284 (YSTE…THRG), 791–819 (YKNS…MVNN), 931–954 (DDNS…RYDK), 994–1015 (SGKY…DDSE), 1278–1306 (KTNN…NPFI), and 1469–1500 (KAPT…NANA). The span at 63–83 (NKNENIKKRINEKDNDTDRED) shows a compositional bias: basic and acidic residues. Composition is skewed to polar residues over residues 205-219 (EHTQ…TSKR) and 228-278 (DKAQ…NRKG). Low complexity-rich tracts occupy residues 793 to 819 (NSMN…MVNN) and 931 to 941 (DDNSVQDSFFS). Composition is skewed to low complexity over residues 1278–1303 (KTNN…NNSN) and 1482–1500 (APTN…NANA).

This sequence belongs to the peptidase C14B family.

Its function is as follows. Protease that cleaves specifically after arginine or lysine residues. This is Metacaspase-3 from Plasmodium falciparum (isolate 3D7).